Reading from the N-terminus, the 490-residue chain is Glucose-6-phosphate 1-dehydrogenase (490 aa).

Residues Arg-49, 91 to 92, and Lys-146 each bind NADP(+); that span reads DV. Substrate contacts are provided by His-176, Lys-180, Glu-214, and Asp-233. The Proton acceptor role is filled by His-238. Residues Lys-338 and Lys-343 each contribute to the substrate site.

The protein belongs to the glucose-6-phosphate dehydrogenase family.

The catalysed reaction is D-glucose 6-phosphate + NADP(+) = 6-phospho-D-glucono-1,5-lactone + NADPH + H(+). Its pathway is carbohydrate degradation; pentose phosphate pathway; D-ribulose 5-phosphate from D-glucose 6-phosphate (oxidative stage): step 1/3. Functionally, catalyzes the oxidation of glucose 6-phosphate to 6-phosphogluconolactone. This chain is Glucose-6-phosphate 1-dehydrogenase, found in Buchnera aphidicola subsp. Schizaphis graminum (strain Sg).